A 428-amino-acid chain; its full sequence is Gamma-glutamyl phosphate reductase (428 aa).

The protein belongs to the gamma-glutamyl phosphate reductase family.

It is found in the cytoplasm. The catalysed reaction is L-glutamate 5-semialdehyde + phosphate + NADP(+) = L-glutamyl 5-phosphate + NADPH + H(+). It functions in the pathway amino-acid biosynthesis; L-proline biosynthesis; L-glutamate 5-semialdehyde from L-glutamate: step 2/2. Catalyzes the NADPH-dependent reduction of L-glutamate 5-phosphate into L-glutamate 5-semialdehyde and phosphate. The product spontaneously undergoes cyclization to form 1-pyrroline-5-carboxylate. The chain is Gamma-glutamyl phosphate reductase from Clostridium tetani (strain Massachusetts / E88).